The primary structure comprises 129 residues: Azurin-2 (129 aa).

The region spanning 1-129 is the Plastocyanin-like domain; that stretch reads AQCEATVESN…MMKGTLKLGS (129 aa). Cys3 and Cys26 are disulfide-bonded. The Cu cation site is built by His46, Cys112, His117, and Met121.

The protein resides in the periplasm. In terms of biological role, transfers electrons from cytochrome c551 to cytochrome oxidase. This Alcaligenes xylosoxydans xylosoxydans (Achromobacter xylosoxidans) protein is Azurin-2.